The chain runs to 1402 residues: Eukaryotic translation initiation factor 4 gamma 1 (1402 aa).

Disordered regions lie at residues 1–123 (MSGA…SPEP) and 165–402 (HEPN…YEYK). Phosphothreonine occurs at positions 11 and 27. Over residues 53 to 64 (GPEHSPSESQPS) the composition is skewed to low complexity. Over residues 65 to 76 (SPSPTPSPPPIL) the composition is skewed to pro residues. The residue at position 120 (serine 120) is a Phosphoserine. Residues 238-251 (ASATPPAVPSATPA) show a composition bias toward low complexity. The segment covering 261 to 275 (QEEEGEEEEEEEEGE) has biased composition (acidic residues). Composition is skewed to basic and acidic residues over residues 280–290 (ESDKGGEDLHP) and 324–340 (KELNKKEAVGDLLDAFK). Low complexity predominate over residues 359–370 (PTPESEGSSGPS). The span at 379–388 (WDAKEDKIHN) shows a compositional bias: basic and acidic residues. Threonine 452 is modified (phosphothreonine). 4 disordered regions span residues 476–517 (ANLG…PPKG), 536–563 (AEKAWKPSSKRTAADKDRGEEDADGSKT), 600–636 (SKGSLTSSLRRPFQNPTSQWPSQHVPLPHGAESATTE), and 828–1028 (MAKG…KREA). Low complexity predominate over residues 479 to 488 (GRPALSSRGP). Arginine 490 and arginine 499 each carry omega-N-methylarginine. A compositionally biased stretch (basic and acidic residues) spans 547–563 (TAADKDRGEEDADGSKT). One can recognise an MIF4G domain in the interval 567 to 793 (FRRVRSILNK…QDVLDLRQSN (227 aa)). Residues 602–621 (GSLTSSLRRPFQNPTSQWPS) show a composition bias toward polar residues. Serine 832 is subject to Phosphoserine. 2 positions are modified to omega-N-methylarginine: arginine 836 and arginine 846. Serine 881 and serine 896 each carry phosphoserine. The span at 892–913 (GGRLSWGKGSSGSGAKPSDAAS) shows a compositional bias: low complexity. Residue lysine 899 is modified to N6-acetyllysine. A compositionally biased stretch (polar residues) spans 918–937 (PATSTLNRFSALQQAVPTES). Phosphoserine occurs at positions 948 and 950. Positions 949–981 (LSRERGGKAGEPRRRLERSERGGDRGDRLDRAR) are enriched in basic and acidic residues. At serine 988 the chain carries Phosphoserine; by PKC/PRKCA. A compositionally biased stretch (basic and acidic residues) spans 989–1028 (FSKEVEERSRERPSQPEGLRKAASLTEDRDRGRDAAKREA). 3 positions are modified to phosphoserine: serine 990, serine 997, and serine 1012. Threonine 1014 is subject to Phosphothreonine. Residues serine 1034 and serine 1041 each carry the phosphoserine modification. In terms of domain architecture, MI spans 1044–1166 (ELEKKSKAII…PMGELFREIT (123 aa)). Positions 1231 to 1401 (EESEAPGQRA…REVEEEESDH (171 aa)) constitute a W2 domain. Residue serine 1399 is modified to Phosphoserine.

Belongs to the eukaryotic initiation factor 4G family. In terms of assembly, eIF4F is a multi-subunit complex, the composition of which varies with external and internal environmental conditions. It is composed of at least EIF4A, EIF4E (cap-binding) and EIF4G1/EIF4G3. Interacts with eIF3 complex, mutually exclusive with EIF4A1 or EIF4A2, EIF4E and through its N-terminus with PABPC1. Interacts with EIF4E or with EIF1 (mutually exclusive) through a common binding site. Interacts through its C-terminus with the serine/threonine kinases MKNK1, and with MKNK2. Appears to act as a scaffold protein, holding these enzymes in place to phosphorylate EIF4E. Non-phosphorylated EIF4EBP1 competes with EIF4G1/EIF4G3 to interact with EIF4E; insulin stimulated MAP-kinase (MAPK1 and MAPK3) phosphorylation of EIF4EBP1 causes dissociation of the complex allowing EIF4G1/EIF4G3 to bind and consequent initiation of translation. EIF4G1/EIF4G3 interacts with PABPC1 to bring about circularization of the mRNA. Interacts with EIF4E3. Interacts with CIRBP and MIF4GD. Interacts with RBM4. Interacts with HNRNPD/AUF1; the interaction requires RNA. Interacts with DDX3X; the interaction requires RNA. Interacts with DAZAP2. Phosphorylated at multiple sites in vivo. Phosphorylation at Ser-988 by PRKCA induces binding to MKNK1.

It is found in the cytoplasm. The protein resides in the nucleus. Its subcellular location is the stress granule. Its function is as follows. Component of the protein complex eIF4F, which is involved in the recognition of the mRNA cap, ATP-dependent unwinding of 5'-terminal secondary structure and recruitment of mRNA to the ribosome. Exists in two complexes, either with EIF1 or with EIF4E (mutually exclusive). Together with EIF1, is required for leaky scanning, in particular for avoiding cap-proximal start codon. Together with EIF4E, antagonizes the scanning promoted by EIF1-EIF4G1 and locates the start codon (through a TISU element) without scanning. As a member of the eIF4F complex, required for endoplasmic reticulum stress-induced ATF4 mRNA translation. The protein is Eukaryotic translation initiation factor 4 gamma 1 (EIF4G1) of Oryctolagus cuniculus (Rabbit).